The primary structure comprises 335 residues: Nucleoid-associated protein YejK (335 aa).

This sequence belongs to the YejK family.

It is found in the cytoplasm. The protein localises to the nucleoid. The polypeptide is Nucleoid-associated protein YejK (Shigella dysenteriae serotype 1 (strain Sd197)).